The sequence spans 160 residues: Putative pre-16S rRNA nuclease (160 aa).

The protein belongs to the YqgF nuclease family.

The protein resides in the cytoplasm. Could be a nuclease involved in processing of the 5'-end of pre-16S rRNA. The protein is Putative pre-16S rRNA nuclease of Rhodopseudomonas palustris (strain ATCC BAA-98 / CGA009).